We begin with the raw amino-acid sequence, 386 residues long: Succinate--CoA ligase [ADP-forming] subunit beta (386 aa).

The ATP-grasp domain occupies 9-244; the sequence is KEILRKYGVP…HDEEDPLETR (236 aa). Residues lysine 46, 53–55, glutamate 99, cysteine 102, and glutamate 107 each bind ATP; that span reads GRG. The Mg(2+) site is built by asparagine 199 and aspartate 213. Residues asparagine 264 and 321–323 each bind substrate; that span reads GIM.

It belongs to the succinate/malate CoA ligase beta subunit family. As to quaternary structure, heterotetramer of two alpha and two beta subunits. Requires Mg(2+) as cofactor.

It carries out the reaction succinate + ATP + CoA = succinyl-CoA + ADP + phosphate. The catalysed reaction is GTP + succinate + CoA = succinyl-CoA + GDP + phosphate. The protein operates within carbohydrate metabolism; tricarboxylic acid cycle; succinate from succinyl-CoA (ligase route): step 1/1. Functionally, succinyl-CoA synthetase functions in the citric acid cycle (TCA), coupling the hydrolysis of succinyl-CoA to the synthesis of either ATP or GTP and thus represents the only step of substrate-level phosphorylation in the TCA. The beta subunit provides nucleotide specificity of the enzyme and binds the substrate succinate, while the binding sites for coenzyme A and phosphate are found in the alpha subunit. This chain is Succinate--CoA ligase [ADP-forming] subunit beta, found in Rickettsia akari (strain Hartford).